The chain runs to 363 residues: Ribosomal RNA large subunit methyltransferase M (363 aa).

Residues S194, 227–230 (CPGG), D246, D266, and D284 contribute to the S-adenosyl-L-methionine site. The active-site Proton acceptor is the K313.

Belongs to the class I-like SAM-binding methyltransferase superfamily. RNA methyltransferase RlmE family. RlmM subfamily. Monomer.

The protein localises to the cytoplasm. It carries out the reaction cytidine(2498) in 23S rRNA + S-adenosyl-L-methionine = 2'-O-methylcytidine(2498) in 23S rRNA + S-adenosyl-L-homocysteine + H(+). In terms of biological role, catalyzes the 2'-O-methylation at nucleotide C2498 in 23S rRNA. This Haemophilus influenzae (strain PittEE) protein is Ribosomal RNA large subunit methyltransferase M.